The primary structure comprises 496 residues: Cytochrome P450 4ae1 (496 aa).

Cys443 contributes to the heme binding site.

It belongs to the cytochrome P450 family. The cofactor is heme.

The protein resides in the endoplasmic reticulum membrane. The protein localises to the microsome membrane. Its function is as follows. May be involved in the metabolism of insect hormones and in the breakdown of synthetic insecticides. The protein is Cytochrome P450 4ae1 (Cyp4ae1) of Drosophila melanogaster (Fruit fly).